Reading from the N-terminus, the 524-residue chain is Peptide chain release factor 3 (524 aa).

Residues 8–276 (NKRRTFAIIS…GFAKYAPAPE (269 aa)) form the tr-type G domain. GTP-binding positions include 17-24 (SHPDAGKT), 85-89 (DTPGH), and 139-142 (NKLD).

This sequence belongs to the TRAFAC class translation factor GTPase superfamily. Classic translation factor GTPase family. PrfC subfamily.

Its subcellular location is the cytoplasm. In terms of biological role, increases the formation of ribosomal termination complexes and stimulates activities of RF-1 and RF-2. It binds guanine nucleotides and has strong preference for UGA stop codons. It may interact directly with the ribosome. The stimulation of RF-1 and RF-2 is significantly reduced by GTP and GDP, but not by GMP. In Hydrogenovibrio crunogenus (strain DSM 25203 / XCL-2) (Thiomicrospira crunogena), this protein is Peptide chain release factor 3.